We begin with the raw amino-acid sequence, 1394 residues long: Cyclic nucleotide-gated channel beta-1 (1394 aa).

3 disordered regions span residues 1 to 95, 112 to 253, and 271 to 675; these read MLGW…AHSS, VPQP…QDSA, and VIRG…SQNS. Residues 1-762 lie on the Cytoplasmic side of the membrane; it reads MLGWVQRVLP…WKKYQFPQSI (762 aa). Composition is skewed to polar residues over residues 68–86 and 116–125; these read PQGTQETALTPPTSLQAQV and AHSSRPSQNI. Basic and acidic residues-rich tracts occupy residues 300–312 and 336–355; these read EESHLILEEVDPH and DEEKGKVVEQTPRELPRIQE. Residues 356–387 are compositionally biased toward acidic residues; sequence EKEDEEEEKEDGEEEEEEGREKEEEEGEEKEE. Over residues 388–408 the composition is skewed to basic and acidic residues; that stretch reads EEGREKEEEEGEKKEEEGREK. The span at 409 to 418 shows a compositional bias: acidic residues; the sequence is EEEEGGEKED. Basic and acidic residues predominate over residues 419-433; that stretch reads EEGREKEEEEGRGKE. Composition is skewed to acidic residues over residues 452 to 464 and 481 to 490; these read EGREEEEDEEEEQ and DRSEESETQD. 2 stretches are compositionally biased toward low complexity: residues 493-508 and 529-554; these read EVGGAQAQGEVGGAQA and EVGGAQAQGEVGGAQEQDGVGGAQDQ. The segment covering 654 to 675 has biased composition (polar residues); that stretch reads DPTSPQGTDDQDRATSTASQNS. The tract at residues 671–681 is calmodulin-binding CaM1; the sequence is ASQNSAIINDR. Residues 682–692 carry the IQ-like motif; that stretch reads LQELVKLFKER. The segment at 699-732 is disordered; sequence KLIDPDVTSDEESPKPSPAKKAPEPAPEVKPAEA. The helical transmembrane segment at 763–793 threads the bilayer; that stretch reads DPLTNLMYILWLFFVVLAWNWNCWLIPVRWA. Residues 794–798 are Extracellular-facing; sequence FPYQT. A helical membrane pass occupies residues 799–825; that stretch reads PDNIHLWLLMDYLCDLIYLLDITVFQM. Topologically, residues 826–837 are cytoplasmic; it reads RLQFVRGGDIIT. A helical transmembrane segment spans residues 838–861; the sequence is DKKEMRNNYVKSQRFKMDMLCLLP. At 862–872 the chain is on the extracellular side; it reads LDLLYLKFGVN. The chain crosses the membrane as a helical span at residues 873-887; it reads PLLRLPRCLKYMAFF. Residues 888-900 are Cytoplasmic-facing; sequence EFNNRLESILSKA. Residues 900 to 999 form an ion conduction pathway region; it reads AYVYRVIRTT…IGQMRDVVGA (100 aa). Residues 901–922 traverse the membrane as a helical segment; that stretch reads YVYRVIRTTAYLLYSLHLNSCL. Over 923 to 931 the chain is Extracellular; sequence YYWASAYEG. Helical transmembrane passes span 932-974 and 975-1002; these read LGST…EIVF and QGLNYFTGVFAFSVMIGQMRDVVGAATA. The tract at residues 959–962 is selectivity filter; sequence TIGG. Residues 1003 to 1394 are Cytoplasmic-facing; sequence GQTYYRSCMD…EEARKEKEEE (392 aa). A cyclic nucleotide-binding domain region spans residues 1082 to 1198; it reads RQMIFDMLKR…LLRKKARRML (117 aa). 3',5'-cyclic GMP contacts are provided by Gly-1143, Glu-1144, Ser-1146, Arg-1156, and Thr-1157. Residue Arg-1156 coordinates 3',5'-cyclic AMP. The interval 1261–1267 is calmodulin-binding CaM2; that stretch reads QQQLLEQ. The tract at residues 1265 to 1394 is disordered; sequence LEQAKSSEDA…EEARKEKEEE (130 aa). A compositionally biased stretch (pro residues) spans 1285–1326; the sequence is EQPPRPEPPAPEAPAPEPTAPEPLAPEAPAPEAPAPSSPPPA. 2 stretches are compositionally biased toward basic and acidic residues: residues 1329–1345 and 1364–1376; these read ERPEGDKDAARPEEHPV and VPEKQEEKEKKEE.

The protein belongs to the cyclic nucleotide-gated cation channel (TC 1.A.1.5) family. CNGB1 subfamily. In terms of assembly, the rod cyclic nucleotide-gated channel is a heterotetramer composed of CNGA1 and CNGB1 subunits with 3:1 stoichiometry. CNGA1:CNGB1 channel binds Ca(2+)-bound CALM1 via CaM1 and CaM2 regions of the CNGB1 subunit; this interaction modulates the affinity of the channel for cNMPs in response to intracellular Ca(2+) levels. The olfactory cyclic nucleotide-gated channel is a heterotetramer composed of CNGA2, CNGA4 and CNGB1 subunits with 2:1:1 stoichiometry. As to expression, retina, testis, kidney, heart and brain.

Its subcellular location is the membrane. The catalysed reaction is Ca(2+)(in) = Ca(2+)(out). It catalyses the reaction Na(+)(in) = Na(+)(out). It carries out the reaction K(+)(in) = K(+)(out). The enzyme catalyses NH4(+)(in) = NH4(+)(out). The catalysed reaction is Rb(+)(in) = Rb(+)(out). It catalyses the reaction Li(+)(in) = Li(+)(out). It carries out the reaction Cs(+)(in) = Cs(+)(out). In terms of biological role, pore-forming subunit of the rod cyclic nucleotide-gated channel. Mediates rod photoresponses at dim light converting transient changes in intracellular cGMP levels into electrical signals. In the dark, cGMP levels are high and keep the channel open enabling a steady inward current carried by Na(+) and Ca(2+) ions that leads to membrane depolarization and neurotransmitter release from synaptic terminals. Upon photon absorption cGMP levels decline leading to channel closure and membrane hyperpolarization that ultimately slows neurotransmitter release and signals the presence of light, the end point of the phototransduction cascade. Pore-forming subunit of the olfactory cyclic nucleotide-gated channel. Operates in the cilia of olfactory sensory neurons where chemical stimulation of the odorant is converted to an electrical signal. Mediates odorant-induced cAMP-dependent Ca(2+) influx triggering neuron depolarization. The rise of intracellular Ca(2+) levels potentiates the olfactory response by activating Ca(2+)-dependent Cl(-) channels, but it also serves as a negative feedback signal to desensitize the channel for rapid adaptation to odorants. Conducts cGMP- and cAMP-gated ion currents, with permeability for monovalent and divalent cations. The selectivity for Ca(2+) over Na(+) increases with cGMP concentrations, whereas the selectivity among monovalent ions is independent of the cGMP levels. The polypeptide is Cyclic nucleotide-gated channel beta-1 (Bos taurus (Bovine)).